The following is a 292-amino-acid chain: 4-hydroxy-tetrahydrodipicolinate synthase (292 aa).

Thr45 serves as a coordination point for pyruvate. The active-site Proton donor/acceptor is Tyr133. The active-site Schiff-base intermediate with substrate is Lys161. Ile203 is a binding site for pyruvate.

This sequence belongs to the DapA family. As to quaternary structure, homotetramer; dimer of dimers.

It is found in the cytoplasm. The catalysed reaction is L-aspartate 4-semialdehyde + pyruvate = (2S,4S)-4-hydroxy-2,3,4,5-tetrahydrodipicolinate + H2O + H(+). It functions in the pathway amino-acid biosynthesis; L-lysine biosynthesis via DAP pathway; (S)-tetrahydrodipicolinate from L-aspartate: step 3/4. Catalyzes the condensation of (S)-aspartate-beta-semialdehyde [(S)-ASA] and pyruvate to 4-hydroxy-tetrahydrodipicolinate (HTPA). The chain is 4-hydroxy-tetrahydrodipicolinate synthase from Salmonella typhi.